The sequence spans 359 residues: Insulin gene enhancer protein ISL-2 (359 aa).

LIM zinc-binding domains follow at residues 25-86 and 87-149; these read AMCV…RLFG and IKCA…LLER. The disordered stretch occupies residues 151–191; that stretch reads AAGSPRSPGPLPGARGLHLPDAGSGRQPALRPHVHKQTEKT. Phosphoserine occurs at positions 154 and 157. A DNA-binding region (homeobox) is located at residues 191 to 250; that stretch reads TTRVRTVLNEKQLHTLRTCYAANPRPDALMKEQLVEMTGLSPRVIRVWFQNKRCKDKKKS. The interval 272–301 is LIM-binding domain (LID); that stretch reads GTPLVAGSPIRHENAVQGSAVEVQTYQPPW. A Phosphoserine modification is found at S279. Positions 326-336 are enriched in low complexity; it reads ESGSLGNSSGS. The interval 326–359 is disordered; it reads ESGSLGNSSGSDVTSLSSQLPDTPNSMVPSPVET. Polar residues predominate over residues 337–359; it reads DVTSLSSQLPDTPNSMVPSPVET.

In terms of assembly, interacts with LHX4.

The protein resides in the nucleus. In terms of biological role, transcriptional factor that defines subclasses of motoneurons that segregate into columns in the spinal cord and select distinct axon pathways. In Homo sapiens (Human), this protein is Insulin gene enhancer protein ISL-2 (ISL2).